A 250-amino-acid polypeptide reads, in one-letter code: tRNA (guanine-N(1)-)-methyltransferase (250 aa).

Residues Gly-112 and 132-137 each bind S-adenosyl-L-methionine; that span reads IGDFVL.

It belongs to the RNA methyltransferase TrmD family. Homodimer.

It localises to the cytoplasm. The catalysed reaction is guanosine(37) in tRNA + S-adenosyl-L-methionine = N(1)-methylguanosine(37) in tRNA + S-adenosyl-L-homocysteine + H(+). Specifically methylates guanosine-37 in various tRNAs. In Marinomonas sp. (strain MWYL1), this protein is tRNA (guanine-N(1)-)-methyltransferase.